The primary structure comprises 2133 residues: Coagulation factor VIII (2133 aa).

The N-terminal stretch at 1–19 (MQLELSTCVFLCLLPLGFS) is a signal peptide. Plastocyanin-like domains are found at residues 20–199 (AIRR…LLVC), 207–357 (ERTQ…QLRR), 399–573 (KTWV…LLIC), and 583–730 (NQMM…VYSC). 2 consecutive F5/8 type A domains span residues 20–357 (AIRR…QLRR) and 399–730 (KTWV…VYSC). C173 and C199 are disulfide-bonded. N-linked (GlcNAc...) asparagine glycosylation is found at N233 and N259. Residues C547 and C573 are joined by a disulfide bond. Residue N601 is glycosylated (N-linked (GlcNAc...) asparagine). A sulfotyrosine mark is found at Y737, Y738, and Y742. 2 disordered regions span residues 760-790 (SFAQ…LDPQ) and 804-914 (PSGD…PHPQ). The b stretch occupies residues 760 to 1599 (SFAQNSRPPS…LISYPDDQEQ (840 aa)). The segment covering 761 to 780 (FAQNSRPPSASQKQFQTITS) has biased composition (polar residues). Basic and acidic residues-rich tracts occupy residues 853-862 (LRPELHHSAE) and 868-878 (EPEKELKKLDS). Residues 879 to 888 (KMSSSSDLLK) show a composition bias toward low complexity. Polar residues predominate over residues 889–900 (TSPTIPSDTLSA). 3 N-linked (GlcNAc...) asparagine glycosylation sites follow: N929, N985, and N1025. The segment at 1042–1078 (LGKNPLSSERGPSPELLTSSGSGKSVKGQSSGQGRIR) is disordered. A compositionally biased stretch (low complexity) spans 1060–1075 (SSGSGKSVKGQSSGQG). N-linked (GlcNAc...) asparagine glycosylation is present at N1111. Positions 1160–1179 (PSVEGFDGGSHAPVPQDSRS) are disordered. Residues N1181, N1208, N1245, N1265, and N1335 are each glycosylated (N-linked (GlcNAc...) asparagine). The tract at residues 1200-1221 (EAPLEAPGNRTGPGPRSAVPRR) is disordered. Disordered regions lie at residues 1358-1391 (LNKV…KSTA) and 1406-1441 (ESNH…APKP). Over residues 1378–1387 (KEWESLEKSP) the composition is skewed to basic and acidic residues. 2 N-linked (GlcNAc...) asparagine glycosylation sites follow: N1408 and N1611. 2 consecutive Plastocyanin-like domains span residues 1495-1659 (RTRH…LLIC) and 1669-1822 (GRQV…SKEC). An F5/8 type A 3 domain is found at 1495 to 1822 (RTRHYFIAAV…TTFLVYSKEC (328 aa)). Disulfide bonds link C1633–C1659, C1822–C1970, and C1975–C2127. F5/8 type C domains follow at residues 1822–1970 (CQAP…LMGC) and 1975–2127 (CSMP…VLGC). N1919 is a glycosylation site (N-linked (GlcNAc...) asparagine).

Belongs to the multicopper oxidase family. Interacts with vWF. vWF binding is essential for the stabilization of F8 in circulation. Proteolytically cleaved by cathepsin CTSG to produce a partially activated form.

The protein resides in the secreted. Its subcellular location is the extracellular space. Functionally, factor VIII, along with calcium and phospholipid, acts as a cofactor for factor IXa when it converts factor X to the activated form, factor Xa. The protein is Coagulation factor VIII (F8) of Sus scrofa (Pig).